The chain runs to 156 residues: Arginine repressor (156 aa).

The protein belongs to the ArgR family.

The protein localises to the cytoplasm. It functions in the pathway amino-acid biosynthesis; L-arginine biosynthesis [regulation]. In terms of biological role, regulates arginine biosynthesis genes. In Photobacterium profundum (strain SS9), this protein is Arginine repressor.